A 163-amino-acid polypeptide reads, in one-letter code: Nucleotide-binding protein CKO_02735 (163 aa).

It belongs to the YajQ family.

Its function is as follows. Nucleotide-binding protein. The polypeptide is Nucleotide-binding protein CKO_02735 (Citrobacter koseri (strain ATCC BAA-895 / CDC 4225-83 / SGSC4696)).